The chain runs to 427 residues: Dihydroorotase (427 aa).

Zn(2+)-binding residues include histidine 60 and histidine 62. Residues 62-64 (HFR) and asparagine 94 each bind substrate. Residues aspartate 152, histidine 179, and histidine 232 each contribute to the Zn(2+) site. Substrate is bound at residue asparagine 278. A Zn(2+)-binding site is contributed by aspartate 305. Aspartate 305 is an active-site residue. Substrate is bound by residues histidine 309 and 323–324 (FG).

It belongs to the metallo-dependent hydrolases superfamily. DHOase family. Class I DHOase subfamily. It depends on Zn(2+) as a cofactor.

The catalysed reaction is (S)-dihydroorotate + H2O = N-carbamoyl-L-aspartate + H(+). It functions in the pathway pyrimidine metabolism; UMP biosynthesis via de novo pathway; (S)-dihydroorotate from bicarbonate: step 3/3. Its function is as follows. Catalyzes the reversible cyclization of carbamoyl aspartate to dihydroorotate. The polypeptide is Dihydroorotase (Enterococcus faecalis (strain ATCC 700802 / V583)).